A 445-amino-acid chain; its full sequence is UDP-N-acetylmuramoylalanine--D-glutamate ligase (445 aa).

110 to 116 (GSNGKTT) contributes to the ATP binding site.

The protein belongs to the MurCDEF family.

It is found in the cytoplasm. It catalyses the reaction UDP-N-acetyl-alpha-D-muramoyl-L-alanine + D-glutamate + ATP = UDP-N-acetyl-alpha-D-muramoyl-L-alanyl-D-glutamate + ADP + phosphate + H(+). It functions in the pathway cell wall biogenesis; peptidoglycan biosynthesis. Functionally, cell wall formation. Catalyzes the addition of glutamate to the nucleotide precursor UDP-N-acetylmuramoyl-L-alanine (UMA). The protein is UDP-N-acetylmuramoylalanine--D-glutamate ligase of Christiangramia forsetii (strain DSM 17595 / CGMCC 1.15422 / KT0803) (Gramella forsetii).